The primary structure comprises 142 residues: Nucleoside diphosphate kinase (142 aa).

ATP is bound by residues Lys11, Phe59, Arg87, Thr93, Arg104, and Asn114. The active-site Pros-phosphohistidine intermediate is the His117.

Belongs to the NDK family. In terms of assembly, homotetramer. Mg(2+) serves as cofactor.

It is found in the cytoplasm. The catalysed reaction is a 2'-deoxyribonucleoside 5'-diphosphate + ATP = a 2'-deoxyribonucleoside 5'-triphosphate + ADP. It carries out the reaction a ribonucleoside 5'-diphosphate + ATP = a ribonucleoside 5'-triphosphate + ADP. Its function is as follows. Major role in the synthesis of nucleoside triphosphates other than ATP. The ATP gamma phosphate is transferred to the NDP beta phosphate via a ping-pong mechanism, using a phosphorylated active-site intermediate. The polypeptide is Nucleoside diphosphate kinase (Yersinia pseudotuberculosis serotype O:1b (strain IP 31758)).